The following is a 299-amino-acid chain: ATP phosphoribosyltransferase (299 aa).

The protein belongs to the ATP phosphoribosyltransferase family. Long subfamily. As to quaternary structure, equilibrium between an active dimeric form, an inactive hexameric form and higher aggregates. Interconversion between the various forms is largely reversible and is influenced by the natural substrates and inhibitors of the enzyme. The cofactor is Mg(2+).

The protein localises to the cytoplasm. It carries out the reaction 1-(5-phospho-beta-D-ribosyl)-ATP + diphosphate = 5-phospho-alpha-D-ribose 1-diphosphate + ATP. It participates in amino-acid biosynthesis; L-histidine biosynthesis; L-histidine from 5-phospho-alpha-D-ribose 1-diphosphate: step 1/9. With respect to regulation, feedback inhibited by histidine. Catalyzes the condensation of ATP and 5-phosphoribose 1-diphosphate to form N'-(5'-phosphoribosyl)-ATP (PR-ATP). Has a crucial role in the pathway because the rate of histidine biosynthesis seems to be controlled primarily by regulation of HisG enzymatic activity. The polypeptide is ATP phosphoribosyltransferase (Klebsiella pneumoniae (strain 342)).